A 510-amino-acid polypeptide reads, in one-letter code: ATP synthase subunit alpha (510 aa).

Glycine 169 to threonine 176 contacts ATP.

It belongs to the ATPase alpha/beta chains family. As to quaternary structure, F-type ATPases have 2 components, CF(1) - the catalytic core - and CF(0) - the membrane proton channel. CF(1) has five subunits: alpha(3), beta(3), gamma(1), delta(1), epsilon(1). CF(0) has three main subunits: a(1), b(2) and c(9-12). The alpha and beta chains form an alternating ring which encloses part of the gamma chain. CF(1) is attached to CF(0) by a central stalk formed by the gamma and epsilon chains, while a peripheral stalk is formed by the delta and b chains.

It localises to the cell inner membrane. It catalyses the reaction ATP + H2O + 4 H(+)(in) = ADP + phosphate + 5 H(+)(out). In terms of biological role, produces ATP from ADP in the presence of a proton gradient across the membrane. The alpha chain is a regulatory subunit. This chain is ATP synthase subunit alpha, found in Nitrobacter winogradskyi (strain ATCC 25391 / DSM 10237 / CIP 104748 / NCIMB 11846 / Nb-255).